The primary structure comprises 396 residues: Pyruvate synthase subunit PorA (396 aa).

In terms of assembly, heterotetramer of one alpha, one beta, one delta and one gamma chain.

It catalyses the reaction 2 oxidized [2Fe-2S]-[ferredoxin] + pyruvate + CoA = 2 reduced [2Fe-2S]-[ferredoxin] + acetyl-CoA + CO2 + H(+). The chain is Pyruvate synthase subunit PorA (porA) from Pyrococcus furiosus (strain ATCC 43587 / DSM 3638 / JCM 8422 / Vc1).